A 435-amino-acid chain; its full sequence is Histidinol dehydrogenase (435 aa).

Tyr-131, Gln-189, and Asn-212 together coordinate NAD(+). Residues Ser-238, Gln-260, and His-263 each contribute to the substrate site. Zn(2+)-binding residues include Gln-260 and His-263. Active-site proton acceptor residues include Glu-327 and His-328. Positions 328, 361, 415, and 420 each coordinate substrate. Asp-361 is a Zn(2+) binding site. His-420 provides a ligand contact to Zn(2+).

The protein belongs to the histidinol dehydrogenase family. In terms of assembly, homodimer. The cofactor is Zn(2+).

The catalysed reaction is L-histidinol + 2 NAD(+) + H2O = L-histidine + 2 NADH + 3 H(+). The protein operates within amino-acid biosynthesis; L-histidine biosynthesis; L-histidine from 5-phospho-alpha-D-ribose 1-diphosphate: step 9/9. In terms of biological role, catalyzes the sequential NAD-dependent oxidations of L-histidinol to L-histidinaldehyde and then to L-histidine. The polypeptide is Histidinol dehydrogenase (hisD) (Buchnera aphidicola subsp. Acyrthosiphon pisum (strain APS) (Acyrthosiphon pisum symbiotic bacterium)).